A 286-amino-acid polypeptide reads, in one-letter code: Bifunctional protein FolD (286 aa).

Residues 164-166 (GRS), serine 193, and isoleucine 234 contribute to the NADP(+) site.

This sequence belongs to the tetrahydrofolate dehydrogenase/cyclohydrolase family. In terms of assembly, homodimer.

The catalysed reaction is (6R)-5,10-methylene-5,6,7,8-tetrahydrofolate + NADP(+) = (6R)-5,10-methenyltetrahydrofolate + NADPH. The enzyme catalyses (6R)-5,10-methenyltetrahydrofolate + H2O = (6R)-10-formyltetrahydrofolate + H(+). The protein operates within one-carbon metabolism; tetrahydrofolate interconversion. In terms of biological role, catalyzes the oxidation of 5,10-methylenetetrahydrofolate to 5,10-methenyltetrahydrofolate and then the hydrolysis of 5,10-methenyltetrahydrofolate to 10-formyltetrahydrofolate. The protein is Bifunctional protein FolD of Oleidesulfovibrio alaskensis (strain ATCC BAA-1058 / DSM 17464 / G20) (Desulfovibrio alaskensis).